A 26-amino-acid chain; its full sequence is Turripeptide OL49 (26 aa).

In terms of processing, contains 3 disulfide bonds. In terms of tissue distribution, expressed by the venom duct.

The protein localises to the secreted. Its function is as follows. Acts as a neurotoxin by inhibiting an ion channel. This is Turripeptide OL49 from Iotyrris olangoensis (Sea snail).